A 674-amino-acid chain; its full sequence is Methionine--tRNA ligase (674 aa).

The short motif at 11 to 21 (PYANGDLHLGH) is the 'HIGH' region element. Cys142, Cys145, Cys155, and Cys158 together coordinate Zn(2+). The 'KMSKS' region signature appears at 330 to 334 (KMSKS). Lys333 provides a ligand contact to ATP. Residues 574-674 (DFMKVDLRIA…EGAQPGMRVK (101 aa)) form the tRNA-binding domain.

The protein belongs to the class-I aminoacyl-tRNA synthetase family. MetG type 1 subfamily. Homodimer. Zn(2+) is required as a cofactor.

It is found in the cytoplasm. The enzyme catalyses tRNA(Met) + L-methionine + ATP = L-methionyl-tRNA(Met) + AMP + diphosphate. Its function is as follows. Is required not only for elongation of protein synthesis but also for the initiation of all mRNA translation through initiator tRNA(fMet) aminoacylation. The polypeptide is Methionine--tRNA ligase (Francisella tularensis subsp. holarctica (strain OSU18)).